The chain runs to 138 residues: Putative pre-16S rRNA nuclease (138 aa).

The protein belongs to the YqgF nuclease family.

It is found in the cytoplasm. Functionally, could be a nuclease involved in processing of the 5'-end of pre-16S rRNA. The polypeptide is Putative pre-16S rRNA nuclease (Salmonella typhimurium (strain LT2 / SGSC1412 / ATCC 700720)).